A 364-amino-acid polypeptide reads, in one-letter code: CCA-adding enzyme (364 aa).

Residues glycine 19 and arginine 22 each coordinate ATP. CTP is bound by residues glycine 19 and arginine 22. Aspartate 32 and aspartate 34 together coordinate Mg(2+). ATP is bound by residues arginine 102, arginine 148, and arginine 151. 3 residues coordinate CTP: arginine 102, arginine 148, and arginine 151.

This sequence belongs to the tRNA nucleotidyltransferase/poly(A) polymerase family. Bacterial CCA-adding enzyme type 2 subfamily. It depends on Mg(2+) as a cofactor.

The enzyme catalyses a tRNA precursor + 2 CTP + ATP = a tRNA with a 3' CCA end + 3 diphosphate. It catalyses the reaction a tRNA with a 3' CCA end + 2 CTP + ATP = a tRNA with a 3' CCACCA end + 3 diphosphate. Functionally, catalyzes the addition and repair of the essential 3'-terminal CCA sequence in tRNAs without using a nucleic acid template. Adds these three nucleotides in the order of C, C, and A to the tRNA nucleotide-73, using CTP and ATP as substrates and producing inorganic pyrophosphate. tRNA 3'-terminal CCA addition is required both for tRNA processing and repair. Also involved in tRNA surveillance by mediating tandem CCA addition to generate a CCACCA at the 3' terminus of unstable tRNAs. While stable tRNAs receive only 3'-terminal CCA, unstable tRNAs are marked with CCACCA and rapidly degraded. The polypeptide is CCA-adding enzyme (Bordetella pertussis (strain Tohama I / ATCC BAA-589 / NCTC 13251)).